Here is a 275-residue protein sequence, read N- to C-terminus: Protein MGF 110-11L (275 aa).

Residues 5–25 traverse the membrane as a helical segment; it reads LGLLLGYSVLILTHELPDLSA. A glycan (N-linked (GlcNAc...) asparagine; by host) is linked at asparagine 61. The next 2 membrane-spanning stretches (helical) occupy residues 127-147 and 149-169; these read HCCF…FAYH and NLHL…IWLS.

The protein belongs to the asfivirus MGF 110 family.

It localises to the host membrane. Plays a role in virus cell tropism, and may be required for efficient virus replication in macrophages. The chain is Protein MGF 110-11L from African swine fever virus (isolate Pig/Kenya/KEN-50/1950) (ASFV).